A 31-amino-acid polypeptide reads, in one-letter code: Photosystem II reaction center protein T (31 aa).

The chain crosses the membrane as a helical span at residues 3–23 (SFAYILILTLAIATLFFAIAF).

This sequence belongs to the PsbT family. PSII is composed of 1 copy each of membrane proteins PsbA, PsbB, PsbC, PsbD, PsbE, PsbF, PsbH, PsbI, PsbJ, PsbK, PsbL, PsbM, PsbT, PsbX, PsbY, PsbZ, Psb30/Ycf12, peripheral proteins PsbO, CyanoQ (PsbQ), PsbU, PsbV and a large number of cofactors. It forms dimeric complexes.

The protein localises to the cellular thylakoid membrane. Found at the monomer-monomer interface of the photosystem II (PS II) dimer, plays a role in assembly and dimerization of PSII. PSII is a light-driven water plastoquinone oxidoreductase, using light energy to abstract electrons from H(2)O, generating a proton gradient subsequently used for ATP formation. In Synechococcus sp. (strain WH7803), this protein is Photosystem II reaction center protein T.